We begin with the raw amino-acid sequence, 562 residues long: Formate--tetrahydrofolate ligase (562 aa).

ATP is bound at residue 71-78; the sequence is TPAGEGKS.

It belongs to the formate--tetrahydrofolate ligase family.

It catalyses the reaction (6S)-5,6,7,8-tetrahydrofolate + formate + ATP = (6R)-10-formyltetrahydrofolate + ADP + phosphate. It functions in the pathway one-carbon metabolism; tetrahydrofolate interconversion. The protein is Formate--tetrahydrofolate ligase of Bacillus thuringiensis (strain Al Hakam).